Here is a 78-residue protein sequence, read N- to C-terminus: Small ribosomal subunit protein bS18 (78 aa).

It belongs to the bacterial ribosomal protein bS18 family. Part of the 30S ribosomal subunit. Forms a tight heterodimer with protein bS6.

In terms of biological role, binds as a heterodimer with protein bS6 to the central domain of the 16S rRNA, where it helps stabilize the platform of the 30S subunit. This Lactobacillus johnsonii (strain CNCM I-12250 / La1 / NCC 533) protein is Small ribosomal subunit protein bS18.